A 1292-amino-acid chain; its full sequence is MYNNYNLCHIRTINWEEIITGPSAMYSYVYNFTSPERACTPCDKSCEQGCWGEGPENCQKYSKTNCSPQCWQGRCFGPNPRECCHLFCAGGCTGPKQSDCIACKNFFDDGVCTQECPPMQKYNPTTYSWEPNPDGKYAYGATCVRRCPEHLLKDNGACVRSCPPKKKALNGECVPCDGPCPKTCKGVEKVHSGNIDSFKDCTIIEGSITILDQSFQGFQHVYRNFSFGKRYEKMHPDKLEVFSTLKEITGFLNIQGDHKDFKNLSYFRNLEVIGGRTLTEYFASLYVVKTSLVSFGLSSLKKIYSGSIAILENKNLCYAQSINWTRIKKSSEHESLLSNNRNESECIKDGLVCDEQCSDEGCWGPGPAQCLSCKNFILGNDCLQDCTAPGIYQADEKTCKVCHEECDGSCIGPNTDHCKKCKHARDGPFCVPECPASKYNDNGVCKSCHGNCVGGCEGPENNIGPNGCHSCDKAILNDHVPEGCLQKKESCPDGYYYEWVSPLEQGPLKPLASKAVCRKCHSRCKKCTGYGFHEHVCQECTKYKRGEQCEDECPADYFADANKLCIPCFSECRGCFGPGPNQCYKCRNYKIYIDEDTDGNTTSFNCTETCTPEYPHKIFNPDSEPYCSLETAGLIENELQPAILAGVAVFALAFLVVAAIIMYFWRVRAKAKENTVKMTMALTGLDDNEPLRPTGVKPNLAKLRIIKEEEMRKGGILGYGAFGNVYKGVWVPEGENVKIPVAIKVLHDGTGANTSKEFLDEAYIMASVEHPNLLQLLAVCMTSQMMLVTQLMPLGCLLDFVRRFKDKIGSKALLNWCTQIARGMAYLEERRLVHRDLAARNVLVQTPNCVKITDFGLAKLLDINEEQYKAAGGKMPIKWLALECIQHRVFTHKSDVWAFGVTIWEVLTYGGRPYENVPARNVPELLEKGERLPQPAICTIDVYMIMIKCWMLDAESRPSFKELAEDFAKMSRDPGRYLAIKGDKYMRLPSYTLQDEKEMIRNLASAMDGPEALVDADEYLQPKSRAPIPPGLSASSTSGSPPNTPVKPCWPNGKPLAADSPTPQNQQNWDRELLRYGANHRNGNVSSHEPGNSAQHGHYTPPNGHCGHVVGSDSTASRYCSDPLKMIDVRDCDVTDDCFDGEVNSAHQQAQVGNLKLDLPLDEDDYLMPSPQLPTNTTQYMDLIGDSKPTEMEPKRVNNGYRKYPEFLTIQGKTSLDNPEYIMSQDEGPLTPQTIGIPTPDLEKVLTNGTFGSQVRQRSSEEESDHEYYNDFDRLERELQPLKPLRKNETTV.

Residues 1 to 641 (MYNNYNLCHI…AGLIENELQP (641 aa)) lie on the Extracellular side of the membrane. Residues Asn-31, Asn-224, Asn-263, Asn-323, Asn-342, Asn-600, and Asn-605 are each glycosylated (N-linked (GlcNAc...) asparagine). Residues 642–662 (AILAGVAVFALAFLVVAAIIM) traverse the membrane as a helical segment. At 663-1292 (YFWRVRAKAK…KPLRKNETTV (630 aa)) the chain is on the cytoplasmic side. The residue at position 675 (Thr-675) is a Phosphothreonine; by PKC. The region spanning 711–978 (MRKGGILGYG…KMSRDPGRYL (268 aa)) is the Protein kinase domain. Residues 717–725 (LGYGAFGNV) and Lys-744 contribute to the ATP site. Asp-836 (proton acceptor) is an active-site residue. A disordered region spans residues 1022 to 1066 (PKSRAPIPPGLSASSTSGSPPNTPVKPCWPNGKPLAADSPTPQNQ). Tyr-1166 carries the post-translational modification Phosphotyrosine; by autocatalysis. The segment at 1253–1292 (SQVRQRSSEEESDHEYYNDFDRLERELQPLKPLRKNETTV) is disordered. The span at 1258–1292 (RSSEEESDHEYYNDFDRLERELQPLKPLRKNETTV) shows a compositional bias: basic and acidic residues.

It belongs to the protein kinase superfamily. Tyr protein kinase family. EGF receptor subfamily.

The protein localises to the membrane. The enzyme catalyses L-tyrosyl-[protein] + ATP = O-phospho-L-tyrosyl-[protein] + ADP + H(+). Activated by MRJP1 during queen determination of honeybee larvae. Its function is as follows. Upon binding to its ligands, transduces the signal through the ras-raf-MAPK pathway and is involved in a myriad of developmental decisions. Involved in the determination of adult size, ovary development, and development timing, especially during queen determination of honeybee larvae. May have an important role in the prolongation of longevity in queens. The sequence is that of Epidermal growth factor receptor (Egfr) from Apis mellifera (Honeybee).